A 685-amino-acid chain; its full sequence is MEWGYLLEVTSLLAALAVLQRSSGAAAASAKELACQEITVPLCKGIGYNYTYMPNQFNHDTQDEAGLEVHQFWPLVEIQCSPDLKFFLCSMYTPICLEDYKKPLPPCRSVCERAKAGCAPLMRQYGFAWPDRMRCDRLPEQGNPDTLCMDYNRTDLTTAAPSPPRRLPPPPPPGEQPPSGSGHSRPPGARPPHRGGSSRGSGDAAAAPPSRGGKARPPGGGAAPCEPGCQCRAPMVSVSSERHPLYNRVKTGQIANCALPCHNPFFSQDERAFTVFWIGLWSVLCFVSTFATVSTFLIDMERFKYPERPIIFLSACYLFVSVGYLVRLVAGHEKVACSGGAPGAGGAGGAGGAAAAGAGAAGAGASSPGARGEYEELGAVEQHVRYETTGPALCTVVFLLVYFFGMASSIWWVILSLTWFLAAGMKWGNEAIAGYSQYFHLAAWLVPSVKSIAVLALSSVDGDPVAGICYVGNQSLDNLRGFVLAPLVIYLFIGTMFLLAGFVSLFRIRSVIKQQGGPTKTHKLEKLMIRLGLFTVLYTVPAAVVVACLFYEQHNRPRWEATHNCPCLRDLQPDQARRPDYAVFMLKYFMCLVVGITSGVWVWSGKTLESWRALCTRCCWASKGAAVGAGAGGSGPGGSGPGPGGGGGHGGGGGSLYSDVSTGLTWRSGTASSVSYPKQMPLSQV.

Positions 1 to 27 are cleaved as a signal peptide; that stretch reads MEWGYLLEVTSLLAALAVLQRSSGAAA. The Extracellular segment spans residues 28–272; that stretch reads ASAKELACQE…NPFFSQDERA (245 aa). Residues 30-151 form the FZ domain; that stretch reads AKELACQEIT…GNPDTLCMDY (122 aa). 5 disulfides stabilise this stretch: C35/C96, C43/C89, C80/C118, C107/C148, and C111/C135. N49 carries an N-linked (GlcNAc...) asparagine glycan. 71-78 contacts hexadecanoate; the sequence is QFWPLVEI. A wnt-binding region spans residues 95–100; that stretch reads ICLEDY. The interval 147–152 is wnt-binding; that stretch reads LCMDYN. N152 carries N-linked (GlcNAc...) asparagine glycosylation. The disordered stretch occupies residues 155 to 223; sequence DLTTAAPSPP…KARPPGGGAA (69 aa). Residues 161–176 are compositionally biased toward pro residues; it reads PSPPRRLPPPPPPGEQ. Low complexity-rich tracts occupy residues 177-187 and 200-223; these read PPSGSGHSRPP and GSGD…GGAA. The helical transmembrane segment at 273–293 threads the bilayer; the sequence is FTVFWIGLWSVLCFVSTFATV. The Cytoplasmic segment spans residues 294 to 309; it reads STFLIDMERFKYPERP. A helical transmembrane segment spans residues 310–330; it reads IIFLSACYLFVSVGYLVRLVA. At 331 to 394 the chain is on the extracellular side; that stretch reads GHEKVACSGG…RYETTGPALC (64 aa). Residues 395–415 traverse the membrane as a helical segment; sequence TVVFLLVYFFGMASSIWWVIL. The Cytoplasmic segment spans residues 416-437; the sequence is SLTWFLAAGMKWGNEAIAGYSQ. Residues 438–458 form a helical membrane-spanning segment; that stretch reads YFHLAAWLVPSVKSIAVLALS. Residues 459-481 are Extracellular-facing; sequence SVDGDPVAGICYVGNQSLDNLRG. N473 carries an N-linked (GlcNAc...) asparagine glycan. A helical transmembrane segment spans residues 482-502; that stretch reads FVLAPLVIYLFIGTMFLLAGF. The Cytoplasmic segment spans residues 503–530; that stretch reads VSLFRIRSVIKQQGGPTKTHKLEKLMIR. A helical transmembrane segment spans residues 531 to 551; it reads LGLFTVLYTVPAAVVVACLFY. The Extracellular portion of the chain corresponds to 552–582; that stretch reads EQHNRPRWEATHNCPCLRDLQPDQARRPDYA. Residues 583 to 603 form a helical membrane-spanning segment; the sequence is VFMLKYFMCLVVGITSGVWVW. Over 604–685 the chain is Cytoplasmic; it reads SGKTLESWRA…YPKQMPLSQV (82 aa). A Lys-Thr-X-X-X-Trp motif, mediates interaction with the PDZ domain of Dvl family members motif is present at residues 606-611; it reads KTLESW. The span at 631-655 shows a compositional bias: gly residues; the sequence is AGGSGPGGSGPGPGGGGGHGGGGGS. The segment at 631 to 656 is disordered; sequence AGGSGPGGSGPGPGGGGGHGGGGGSL. The short motif at 683-685 is the PDZ-binding element; it reads SQV.

It belongs to the G-protein coupled receptor Fz/Smo family. As to quaternary structure, component of a Wnt-signaling complex that contains a WNT protein, a FZD protein and LRP5 or LRP6. Interacts directly with LRP5 or LRP6; the interaction is promoted by Wnt-binding and signaling and inhibited by DKK1. Interacts (via the PDZ-binding motif) with GPOC (via its PDZ domain). Interacts with RSPO1 and RSPO3. Interacts with glypican GPC3. Post-translationally, ubiquitinated by ZNRF3, leading to its degradation by the proteasome. Expressed in chondrocytes.

It is found in the membrane. Its subcellular location is the golgi apparatus. The protein localises to the cell membrane. Functionally, receptor for Wnt proteins. Component of the Wnt-Fzd-LRP5-LRP6 complex that triggers beta-catenin signaling through inducing aggregation of receptor-ligand complexes into ribosome-sized signalosomes. The beta-catenin canonical signaling pathway leads to the activation of disheveled proteins, inhibition of GSK-3 kinase, nuclear accumulation of beta-catenin and activation of Wnt target genes. A second signaling pathway involving PKC and calcium fluxes has been seen for some family members, but it is not yet clear if it represents a distinct pathway or if it can be integrated in the canonical pathway, as PKC seems to be required for Wnt-mediated inactivation of GSK-3 kinase. Both pathways seem to involve interactions with G-proteins. May be involved in transduction and intercellular transmission of polarity information during tissue morphogenesis and/or in differentiated tissues. Coreceptor along with RYK of Wnt proteins, such as WNT1. The protein is Frizzled-8 (Fzd8) of Mus musculus (Mouse).